A 474-amino-acid polypeptide reads, in one-letter code: UDP-N-acetylmuramate--L-alanine ligase (474 aa).

Position 108-114 (108-114 (GTHGKTT)) interacts with ATP.

The protein belongs to the MurCDEF family.

Its subcellular location is the cytoplasm. It carries out the reaction UDP-N-acetyl-alpha-D-muramate + L-alanine + ATP = UDP-N-acetyl-alpha-D-muramoyl-L-alanine + ADP + phosphate + H(+). It functions in the pathway cell wall biogenesis; peptidoglycan biosynthesis. In terms of biological role, cell wall formation. The protein is UDP-N-acetylmuramate--L-alanine ligase of Chloroflexus aggregans (strain MD-66 / DSM 9485).